Reading from the N-terminus, the 62-residue chain is uncharacterized protein (62 aa).

2 consecutive 4Fe-4S ferredoxin-type domains span residues 2–31 and 32–62; these read AVTIDYSLCKGAECAECVNNCPMEVFEIEG and DKVVVARPDDCTYCGVCEDVCPTGAVKVEPE. [4Fe-4S] cluster is bound by residues Cys10, Cys15, Cys18, Cys22, Cys42, Cys45, Cys48, and Cys52.

Requires [4Fe-4S] cluster as cofactor.

This is an uncharacterized protein from Methanocaldococcus jannaschii (strain ATCC 43067 / DSM 2661 / JAL-1 / JCM 10045 / NBRC 100440) (Methanococcus jannaschii).